A 158-amino-acid polypeptide reads, in one-letter code: Photosystem I assembly protein Ycf3 (158 aa).

3 TPR repeats span residues 35–68 (AFSY…EEDV), 72–105 (SYII…NPRL), and 113–146 (AVIY…APGQ).

The protein belongs to the Ycf3 family.

The protein localises to the plastid. It is found in the chloroplast thylakoid membrane. Functionally, essential for the assembly of the photosystem I (PSI) complex. May act as a chaperone-like factor to guide the assembly of the PSI subunits. In Cyanidioschyzon merolae (strain NIES-3377 / 10D) (Unicellular red alga), this protein is Photosystem I assembly protein Ycf3.